A 192-amino-acid polypeptide reads, in one-letter code: uncharacterized protein (192 aa).

Residues 1 to 17 form the signal peptide; the sequence is MFKKILFPLVALFMLAG. A lipid anchor (N-palmitoyl cysteine) is attached at Cys18. Cys18 carries the S-diacylglycerol cysteine lipid modification.

This sequence to H.influenzae HI_0162.

The protein localises to the cell membrane. This is an uncharacterized protein from Escherichia coli O6:H1 (strain CFT073 / ATCC 700928 / UPEC).